The sequence spans 517 residues: Beta-galactoside alpha-2,6-sialyltransferase 2 (517 aa).

Residues 1 to 10 (MKPNLKQWKQ) lie on the Cytoplasmic side of the membrane. Residues 11-31 (FMLFGICAWGLLFLVIFVYFT) form a helical; Signal-anchor for type II membrane protein membrane-spanning segment. Over 32 to 517 (DSNSVEPVPS…IHCPIKDHIT (486 aa)) the chain is Lumenal. Asn201, Asn298, and Asn328 each carry an N-linked (GlcNAc...) asparagine glycan. 3 cysteine pairs are disulfide-bonded: Cys244–Cys510, Cys287–Cys439, and Cys457–Cys468.

This sequence belongs to the glycosyltransferase 29 family.

The protein localises to the golgi apparatus. It is found in the golgi stack membrane. It carries out the reaction a beta-D-galactoside + CMP-N-acetyl-beta-neuraminate = an N-acetyl-alpha-neuraminyl-(2-&gt;6)-beta-D-galactosyl derivative + CMP + H(+). In terms of biological role, transfers sialic acid from the donor of substrate CMP-sialic acid to galactose containing acceptor substrates. This chain is Beta-galactoside alpha-2,6-sialyltransferase 2 (st6gal2), found in Xenopus tropicalis (Western clawed frog).